Consider the following 446-residue polypeptide: tRNA-2-methylthio-N(6)-dimethylallyladenosine synthase (446 aa).

The MTTase N-terminal domain occupies 6-122 (RRYHITTFGC…LGDLLQQVFD (117 aa)). Positions 15, 51, 85, 157, 161, and 164 each coordinate [4Fe-4S] cluster. In terms of domain architecture, Radical SAM core spans 143 to 380 (RDSNITAWVN…NHLVATKAAE (238 aa)). The region spanning 383–446 (QRYLGRIEEI…RPFSLTGVIF (64 aa)) is the TRAM domain.

Belongs to the methylthiotransferase family. MiaB subfamily. As to quaternary structure, monomer. Requires [4Fe-4S] cluster as cofactor.

The protein localises to the cytoplasm. The enzyme catalyses N(6)-dimethylallyladenosine(37) in tRNA + (sulfur carrier)-SH + AH2 + 2 S-adenosyl-L-methionine = 2-methylsulfanyl-N(6)-dimethylallyladenosine(37) in tRNA + (sulfur carrier)-H + 5'-deoxyadenosine + L-methionine + A + S-adenosyl-L-homocysteine + 2 H(+). Its function is as follows. Catalyzes the methylthiolation of N6-(dimethylallyl)adenosine (i(6)A), leading to the formation of 2-methylthio-N6-(dimethylallyl)adenosine (ms(2)i(6)A) at position 37 in tRNAs that read codons beginning with uridine. This is tRNA-2-methylthio-N(6)-dimethylallyladenosine synthase from Microcystis aeruginosa (strain NIES-843 / IAM M-2473).